The primary structure comprises 299 residues: UDP-N-acetylenolpyruvoylglucosamine reductase (299 aa).

Residues 21–189 form the FAD-binding PCMH-type domain; sequence RVGGPAQWLL…LSARFRLEPG (169 aa). Residue Arg-168 is part of the active site. Ser-219 acts as the Proton donor in catalysis. Glu-289 is a catalytic residue.

Belongs to the MurB family. Requires FAD as cofactor.

It is found in the cytoplasm. The catalysed reaction is UDP-N-acetyl-alpha-D-muramate + NADP(+) = UDP-N-acetyl-3-O-(1-carboxyvinyl)-alpha-D-glucosamine + NADPH + H(+). The protein operates within cell wall biogenesis; peptidoglycan biosynthesis. Functionally, cell wall formation. This is UDP-N-acetylenolpyruvoylglucosamine reductase from Parasynechococcus marenigrum (strain WH8102).